We begin with the raw amino-acid sequence, 209 residues long: Glycolipid transfer protein (209 aa).

An N-acetylalanine modification is found at alanine 2. 2 tandem repeats follow at residues 45 to 55 (IKADISGNITK) and 56 to 66 (IKAVYDTNPAK). Residues 45–66 (IKADISGNITKIKAVYDTNPAK) form a 2 X 12 AA approximate tandem repeats region. Residue 48 to 55 (DISGNITK) coordinates beta-D-galactosyl-(1-&gt;4)-beta-D-glucosyl-(1&lt;-&gt;1)-N-[(9Z)-octadecenoyl]-sphing-4-enine. 2 residues coordinate beta-D-galactosyl-(1-&gt;4)-beta-D-glucosyl-(1&lt;-&gt;1)-N-[(9Z)-octadecenoyl]-sphing-4-enine: histidine 140 and tyrosine 207.

The protein belongs to the GLTP family. In terms of assembly, monomer. In terms of tissue distribution, detected in fibroblasts (at protein level). Detected in fibroblasts and in various cancer cell lines.

It is found in the cytoplasm. Its function is as follows. Accelerates the intermembrane transfer of various glycolipids. Catalyzes the transfer of various glycosphingolipids between membranes but does not catalyze the transfer of phospholipids. May be involved in the intracellular translocation of glucosylceramides. The chain is Glycolipid transfer protein (GLTP) from Homo sapiens (Human).